A 309-amino-acid polypeptide reads, in one-letter code: Ribonuclease Z (309 aa).

7 residues coordinate Zn(2+): histidine 63, histidine 65, aspartate 67, histidine 68, histidine 141, aspartate 212, and histidine 270. The active-site Proton acceptor is the aspartate 67.

It belongs to the RNase Z family. As to quaternary structure, homodimer. Zn(2+) is required as a cofactor.

It carries out the reaction Endonucleolytic cleavage of RNA, removing extra 3' nucleotides from tRNA precursor, generating 3' termini of tRNAs. A 3'-hydroxy group is left at the tRNA terminus and a 5'-phosphoryl group is left at the trailer molecule.. In terms of biological role, zinc phosphodiesterase, which displays some tRNA 3'-processing endonuclease activity. Probably involved in tRNA maturation, by removing a 3'-trailer from precursor tRNA. In Lactobacillus johnsonii (strain CNCM I-12250 / La1 / NCC 533), this protein is Ribonuclease Z.